A 227-amino-acid polypeptide reads, in one-letter code: Phosphatidylserine decarboxylase proenzyme (227 aa).

Catalysis depends on Ser-184, which acts as the Schiff-base intermediate with substrate; via pyruvic acid. Ser-184 carries the pyruvic acid (Ser); by autocatalysis modification.

It belongs to the phosphatidylserine decarboxylase family. PSD-A subfamily. In terms of assembly, heterodimer of a large membrane-associated beta subunit and a small pyruvoyl-containing alpha subunit. It depends on pyruvate as a cofactor. Is synthesized initially as an inactive proenzyme. Formation of the active enzyme involves a self-maturation process in which the active site pyruvoyl group is generated from an internal serine residue via an autocatalytic post-translational modification. Two non-identical subunits are generated from the proenzyme in this reaction, and the pyruvate is formed at the N-terminus of the alpha chain, which is derived from the carboxyl end of the proenzyme. The post-translation cleavage follows an unusual pathway, termed non-hydrolytic serinolysis, in which the side chain hydroxyl group of the serine supplies its oxygen atom to form the C-terminus of the beta chain, while the remainder of the serine residue undergoes an oxidative deamination to produce ammonia and the pyruvoyl prosthetic group on the alpha chain.

It is found in the cell membrane. It catalyses the reaction a 1,2-diacyl-sn-glycero-3-phospho-L-serine + H(+) = a 1,2-diacyl-sn-glycero-3-phosphoethanolamine + CO2. It participates in phospholipid metabolism; phosphatidylethanolamine biosynthesis; phosphatidylethanolamine from CDP-diacylglycerol: step 2/2. In terms of biological role, catalyzes the formation of phosphatidylethanolamine (PtdEtn) from phosphatidylserine (PtdSer). This is Phosphatidylserine decarboxylase proenzyme from Ehrlichia ruminantium (strain Gardel).